A 266-amino-acid chain; its full sequence is UPF0328 protein ECU03_0130 (266 aa).

Belongs to the UPF0328 family.

This Encephalitozoon cuniculi (strain GB-M1) (Microsporidian parasite) protein is UPF0328 protein ECU03_0130.